The chain runs to 176 residues: Large ribosomal subunit protein bL12m (176 aa).

This sequence belongs to the bacterial ribosomal protein bL12 family. Component of the mitochondrial large ribosomal subunit (mt-LSU). Mature N.crassa 74S mitochondrial ribosomes consist of a small (37S) and a large (54S) subunit. The 37S small subunit contains a 16S ribosomal RNA (16S mt-rRNA) and 32 different proteins. The 54S large subunit contains a 23S rRNA (23S mt-rRNA) and 42 different proteins.

It is found in the mitochondrion. Component of the mitochondrial ribosome (mitoribosome), a dedicated translation machinery responsible for the synthesis of mitochondrial genome-encoded proteins, including at least some of the essential transmembrane subunits of the mitochondrial respiratory chain. The mitoribosomes are attached to the mitochondrial inner membrane and translation products are cotranslationally integrated into the membrane. This is Large ribosomal subunit protein bL12m (mrpl12) from Neurospora crassa (strain ATCC 24698 / 74-OR23-1A / CBS 708.71 / DSM 1257 / FGSC 987).